The sequence spans 203 residues: Small ribosomal subunit protein uS5 (203 aa).

Residues 1-18 (MENNVKKETIVDSEKVEK) are compositionally biased toward basic and acidic residues. The interval 1–36 (MENNVKKETIVDSEKVEKQQPVTAPVVNKKENTQPK) is disordered. In terms of domain architecture, S5 DRBM spans 49–112 (FEERVVKIKR…KNANNNLIKV (64 aa)).

The protein belongs to the universal ribosomal protein uS5 family. Part of the 30S ribosomal subunit. Contacts proteins S4 and S8.

Its function is as follows. With S4 and S12 plays an important role in translational accuracy. Functionally, located at the back of the 30S subunit body where it stabilizes the conformation of the head with respect to the body. This is Small ribosomal subunit protein uS5 from Ureaplasma urealyticum serovar 10 (strain ATCC 33699 / Western).